The following is a 385-amino-acid chain: tRNA-specific 2-thiouridylase MnmA (385 aa).

Residues 29-36 (GLSGGVDS) and L55 each bind ATP. C116 serves as the catalytic Nucleophile. A disulfide bridge links C116 with C225. G141 is a binding site for ATP. Positions 175–177 (KDQ) are interaction with tRNA. C225 (cysteine persulfide intermediate) is an active-site residue. The interval 330 to 331 (RY) is interaction with tRNA.

The protein belongs to the MnmA/TRMU family.

The protein resides in the cytoplasm. The catalysed reaction is S-sulfanyl-L-cysteinyl-[protein] + uridine(34) in tRNA + AH2 + ATP = 2-thiouridine(34) in tRNA + L-cysteinyl-[protein] + A + AMP + diphosphate + H(+). Its function is as follows. Catalyzes the 2-thiolation of uridine at the wobble position (U34) of tRNA, leading to the formation of s(2)U34. In Prochlorococcus marinus (strain AS9601), this protein is tRNA-specific 2-thiouridylase MnmA.